The chain runs to 100 residues: Integration host factor subunit alpha (100 aa).

This sequence belongs to the bacterial histone-like protein family. In terms of assembly, heterodimer of an alpha and a beta chain.

Its function is as follows. This protein is one of the two subunits of integration host factor, a specific DNA-binding protein that functions in genetic recombination as well as in transcriptional and translational control. The sequence is that of Integration host factor subunit alpha from Jannaschia sp. (strain CCS1).